We begin with the raw amino-acid sequence, 408 residues long: uncharacterized protein (408 aa).

The protein belongs to the protein kinase superfamily. ADCK protein kinase family.

This is an uncharacterized protein from Synechocystis sp. (strain ATCC 27184 / PCC 6803 / Kazusa).